The following is a 513-amino-acid chain: ATP synthase subunit alpha (513 aa).

169 to 176 (GDRQTGKT) contacts ATP.

It belongs to the ATPase alpha/beta chains family. As to quaternary structure, F-type ATPases have 2 components, CF(1) - the catalytic core - and CF(0) - the membrane proton channel. CF(1) has five subunits: alpha(3), beta(3), gamma(1), delta(1), epsilon(1). CF(0) has three main subunits: a(1), b(2) and c(9-12). The alpha and beta chains form an alternating ring which encloses part of the gamma chain. CF(1) is attached to CF(0) by a central stalk formed by the gamma and epsilon chains, while a peripheral stalk is formed by the delta and b chains.

It localises to the cell inner membrane. It catalyses the reaction ATP + H2O + 4 H(+)(in) = ADP + phosphate + 5 H(+)(out). Its function is as follows. Produces ATP from ADP in the presence of a proton gradient across the membrane. The alpha chain is a regulatory subunit. In Actinobacillus pleuropneumoniae serotype 3 (strain JL03), this protein is ATP synthase subunit alpha.